Consider the following 350-residue polypeptide: Heat-inducible transcription repressor HrcA (350 aa).

The protein belongs to the HrcA family.

In terms of biological role, negative regulator of class I heat shock genes (grpE-dnaK-dnaJ and groELS operons). Prevents heat-shock induction of these operons. The polypeptide is Heat-inducible transcription repressor HrcA (Xanthomonas euvesicatoria pv. vesicatoria (strain 85-10) (Xanthomonas campestris pv. vesicatoria)).